The primary structure comprises 341 residues: UDP-3-O-acylglucosamine N-acyltransferase (341 aa).

Residue His241 is the Proton acceptor of the active site.

It belongs to the transferase hexapeptide repeat family. LpxD subfamily. As to quaternary structure, homotrimer.

It catalyses the reaction a UDP-3-O-[(3R)-3-hydroxyacyl]-alpha-D-glucosamine + a (3R)-hydroxyacyl-[ACP] = a UDP-2-N,3-O-bis[(3R)-3-hydroxyacyl]-alpha-D-glucosamine + holo-[ACP] + H(+). It participates in bacterial outer membrane biogenesis; LPS lipid A biosynthesis. Its function is as follows. Catalyzes the N-acylation of UDP-3-O-acylglucosamine using 3-hydroxyacyl-ACP as the acyl donor. Is involved in the biosynthesis of lipid A, a phosphorylated glycolipid that anchors the lipopolysaccharide to the outer membrane of the cell. The chain is UDP-3-O-acylglucosamine N-acyltransferase from Haemophilus ducreyi (strain 35000HP / ATCC 700724).